The chain runs to 241 residues: Hybrid peroxiredoxin hyPrx5 (241 aa).

Positions 3 to 167 (SMEGKKVPQV…MLKYLAPQHQ (165 aa)) constitute a Thioredoxin domain. C49 serves as the catalytic Cysteine sulfenic acid (-SOH) intermediate; for peroxiredoxin activity. In terms of domain architecture, Glutaredoxin spans 170–241 (ESISIFTKPG…GSDDLEKYFA (72 aa)). A disulfide bridge connects residues C180 and C183.

In the N-terminal section; belongs to the peroxiredoxin family. Prx5 subfamily. The protein in the C-terminal section; belongs to the glutaredoxin family. Homotetramer; interconnecting Prx and Grx domains of different monomers.

It carries out the reaction a hydroperoxide + 2 glutathione = an alcohol + glutathione disulfide + H2O. Thiol-specific peroxidase that catalyzes the reduction of hydrogen peroxide and organic hydroperoxides to water and alcohols, respectively. Plays a role in cell protection against oxidative stress by detoxifying peroxides. This chain is Hybrid peroxiredoxin hyPrx5 (PGdx), found in Haemophilus influenzae (strain ATCC 51907 / DSM 11121 / KW20 / Rd).